The chain runs to 136 residues: Large ribosomal subunit protein uL22 (136 aa).

The protein belongs to the universal ribosomal protein uL22 family. As to quaternary structure, part of the 50S ribosomal subunit.

This protein binds specifically to 23S rRNA; its binding is stimulated by other ribosomal proteins, e.g. L4, L17, and L20. It is important during the early stages of 50S assembly. It makes multiple contacts with different domains of the 23S rRNA in the assembled 50S subunit and ribosome. Its function is as follows. The globular domain of the protein is located near the polypeptide exit tunnel on the outside of the subunit, while an extended beta-hairpin is found that lines the wall of the exit tunnel in the center of the 70S ribosome. The chain is Large ribosomal subunit protein uL22 from Bacteroides thetaiotaomicron (strain ATCC 29148 / DSM 2079 / JCM 5827 / CCUG 10774 / NCTC 10582 / VPI-5482 / E50).